The chain runs to 486 residues: High-affinity iron permease fer2 (486 aa).

2 consecutive transmembrane segments (helical) span residues Ile-76 to Leu-96 and Leu-113 to Ile-133. The N-linked (GlcNAc...) asparagine glycan is linked to Asn-174. Residues His-175–Glu-209 form a disordered region. Positions Ser-179–Gln-189 are enriched in low complexity. 3 helical membrane-spanning segments follow: residues Ala-252 to Ile-272, Ser-283 to Phe-303, and Leu-308 to Gly-328. Asn-393 is a glycosylation site (N-linked (GlcNAc...) asparagine). A helical membrane pass occupies residues Ser-400–Trp-420. Asn-438 carries N-linked (GlcNAc...) asparagine glycosylation. The segment at Ile-441–His-486 is disordered. Over residues Arg-446–His-466 the composition is skewed to basic and acidic residues.

Belongs to the oxidase-dependent Fe transporter (OFeT) (TC 9.A.10.1) family.

The protein localises to the cell membrane. Its function is as follows. Permease for high affinity iron uptake. In Mycosarcoma maydis (Corn smut fungus), this protein is High-affinity iron permease fer2.